We begin with the raw amino-acid sequence, 245 residues long: Aliphatic sulfonates import ATP-binding protein SsuB 1 (245 aa).

One can recognise an ABC transporter domain in the interval 8–223 (VSITGLRKSF…ERADPDILRY (216 aa)). Residue 40 to 47 (GPSGTGKT) participates in ATP binding.

This sequence belongs to the ABC transporter superfamily. Aliphatic sulfonates importer (TC 3.A.1.17.2) family. As to quaternary structure, the complex is composed of two ATP-binding proteins (SsuB), two transmembrane proteins (SsuC) and a solute-binding protein (SsuA).

Its subcellular location is the cell membrane. It carries out the reaction ATP + H2O + aliphatic sulfonate-[sulfonate-binding protein]Side 1 = ADP + phosphate + aliphatic sulfonateSide 2 + [sulfonate-binding protein]Side 1.. Part of the ABC transporter complex SsuABC involved in aliphatic sulfonates import. Responsible for energy coupling to the transport system. This chain is Aliphatic sulfonates import ATP-binding protein SsuB 1, found in Nocardia farcinica (strain IFM 10152).